A 273-amino-acid chain; its full sequence is 5-deoxy-glucuronate isomerase (273 aa).

The protein belongs to the isomerase IolB family.

The catalysed reaction is 5-deoxy-D-glucuronate = 5-dehydro-2-deoxy-D-gluconate. It participates in polyol metabolism; myo-inositol degradation into acetyl-CoA; acetyl-CoA from myo-inositol: step 4/7. Involved in the isomerization of 5-deoxy-glucuronate (5DG) to 5-dehydro-2-deoxy-D-gluconate (DKG or 2-deoxy-5-keto-D-gluconate). The sequence is that of 5-deoxy-glucuronate isomerase from Listeria monocytogenes serotype 4b (strain CLIP80459).